Consider the following 284-residue polypeptide: Tropomyosin (284 aa).

The stretch at 1–284 forms a coiled coil; sequence MDAIKKKMLA…DSTFAELAGY (284 aa). The segment at 105–131 is disordered; it reads RLQSATEKLEEASKAADESERGRKVLE.

Belongs to the tropomyosin family. As to quaternary structure, homodimer.

Tropomyosin, in association with the troponin complex, plays a central role in the calcium dependent regulation of muscle contraction. The protein is Tropomyosin of Cornu aspersum (Brown garden snail).